Here is a 652-residue protein sequence, read N- to C-terminus: Bifunctional protein ThiO/ThiG (652 aa).

The segment at 1 to 366 (MTRDIVIIGG…HYSRFQKQAS (366 aa)) is thiO. FAD is bound by residues 5-19 (IVII…AIAV) and 44-46 (AGM). Residue Glu-52 participates in glycine binding. Residue Val-173 participates in FAD binding. Arg-301 and Arg-327 together coordinate glycine. 325-331 (HYRNGIL) contributes to the FAD binding site. Positions 393–652 (SLIIAGKSFH…ASSPVTGTIS (260 aa)) are thiG. The Schiff-base intermediate with DXP role is filled by Lys-494. Residues Gly-555, 581–582 (AG), and 603–604 (NS) each bind 1-deoxy-D-xylulose 5-phosphate.

In the N-terminal section; belongs to the DAO family. ThiO subfamily. This sequence in the C-terminal section; belongs to the ThiG family. Interacts with ThiH and ThiS. The cofactor is FAD.

It is found in the cytoplasm. It catalyses the reaction glycine + O2 + H2O = glyoxylate + H2O2 + NH4(+). The enzyme catalyses [ThiS sulfur-carrier protein]-C-terminal-Gly-aminoethanethioate + 2-iminoacetate + 1-deoxy-D-xylulose 5-phosphate = [ThiS sulfur-carrier protein]-C-terminal Gly-Gly + 2-[(2R,5Z)-2-carboxy-4-methylthiazol-5(2H)-ylidene]ethyl phosphate + 2 H2O + H(+). It participates in cofactor biosynthesis; thiamine diphosphate biosynthesis. Catalyzes the FAD-dependent oxidative deamination of glycine. Is essential for thiamine biosynthesis since the oxidation of glycine catalyzed by ThiO generates the glycine imine intermediate (dehydroglycine) required for the biosynthesis of the thiazole ring of thiamine pyrophosphate. In terms of biological role, catalyzes the rearrangement of 1-deoxy-D-xylulose 5-phosphate (DXP) to produce the thiazole phosphate moiety of thiamine. Sulfur is provided by the thiocarboxylate moiety of the carrier protein ThiS. In vitro, sulfur can be provided by H(2)S. This is Bifunctional protein ThiO/ThiG (thiO/thiG) from Trichormus variabilis (strain ATCC 29413 / PCC 7937) (Anabaena variabilis).